Consider the following 236-residue polypeptide: Orotidine 5'-phosphate decarboxylase (236 aa).

Substrate contacts are provided by residues D13, K35, 62 to 71, T123, R184, Q193, G213, and R214; that span reads DLKFYDIPQT. K64 functions as the Proton donor in the catalytic mechanism.

The protein belongs to the OMP decarboxylase family. Type 1 subfamily. Homodimer.

The enzyme catalyses orotidine 5'-phosphate + H(+) = UMP + CO2. Its pathway is pyrimidine metabolism; UMP biosynthesis via de novo pathway; UMP from orotate: step 2/2. Its function is as follows. Catalyzes the decarboxylation of orotidine 5'-monophosphate (OMP) to uridine 5'-monophosphate (UMP). In Coxiella burnetii (strain CbuK_Q154) (Coxiella burnetii (strain Q154)), this protein is Orotidine 5'-phosphate decarboxylase.